The primary structure comprises 102 residues: Putative defensin-like protein 152 (102 aa).

An N-terminal signal peptide occupies residues 1-29; the sequence is MKKASQLSTTILTIFIVLAIGMMVKGTVG. Intrachain disulfides connect Cys34/Cys93, Cys51/Cys71, Cys56/Cys87, and Cys60/Cys89.

The protein belongs to the DEFL family.

The protein localises to the secreted. This Arabidopsis thaliana (Mouse-ear cress) protein is Putative defensin-like protein 152 (LCR11).